Consider the following 539-residue polypeptide: Monocarboxylate transporter 8 (539 aa).

The tract at residues 1 to 92 (MALQSQASEE…VETRGTARGF (92 aa)) is disordered. Alanine 2 is modified (N-acetylalanine). Topologically, residues 2 to 96 (ALQSQASEEA…GTARGFQPPE (95 aa)) are cytoplasmic. Residues 31–41 (PESEPEPEPEP) are compositionally biased toward acidic residues. Over residues 42 to 64 (EPVPVPPPEPQPEPQPLPDPAPL) the composition is skewed to pro residues. Residues 97 to 117 (GGFGWVVVFAATWCNGSIFGI) traverse the membrane as a helical segment. The Extracellular segment spans residues 118–143 (HNSVGILYSMLLEEEKEKNRQVEFQA). The chain crosses the membrane as a helical span at residues 144–164 (AWVGALAMGMIFFCSPIVSIF). Topologically, residues 165–171 (TDRLGCR) are cytoplasmic. The helical transmembrane segment at 172–192 (ITATAGAAVAFIGLHTSSFTS) threads the bilayer. At 193 to 200 (SLSLRYFT) the chain is on the extracellular side. The helical transmembrane segment at 201–221 (YGILFGCGCSFAFQPSLVILG) threads the bilayer. At 222–229 (HYFQRRLG) the chain is on the cytoplasmic side. A helical membrane pass occupies residues 230–250 (LANGVVSAGSSIFSMSFPFLI). The Extracellular segment spans residues 251–258 (RMLGDKIK). A helical membrane pass occupies residues 259–279 (LAQTFQVLSTFMFVLMLLSLT). The Cytoplasmic portion of the chain corresponds to 280–322 (YRPLLPSSQDTPSKRGVRTLHQRFLAQLRKYFNMRVFRQRTYR). Residues 323–343 (IWAFGIAAAALGYFVPYVHLM) form a helical membrane-spanning segment. Residues 344–356 (KYVEEEFSEIKET) are Extracellular-facing. Residues 357–377 (WVLLVCIGATSGLGRLVSGHI) traverse the membrane as a helical segment. Topologically, residues 378-386 (SDSIPGLKK) are cytoplasmic. A helical membrane pass occupies residues 387-407 (IYLQVLSFLLLGLMSMMIPLC). The Extracellular portion of the chain corresponds to 408–409 (RD). A helical transmembrane segment spans residues 410–430 (FGGLIVVCLFLGLCDGFFITI). The Cytoplasmic portion of the chain corresponds to 431–447 (MAPIAFELVGPMQASQA). The chain crosses the membrane as a helical span at residues 448-468 (IGYLLGMMALPMIAGPPIAGL). The Extracellular portion of the chain corresponds to 469 to 477 (LRNCFGDYH). A helical membrane pass occupies residues 478-498 (VAFYFAGVPPIIGAVILFFVP). Residues 499–539 (LMHQRMFKKEQRDSSKDKMLAPDPDPNGELLPGSPNPEEPI) lie on the Cytoplasmic side of the membrane. Basic and acidic residues predominate over residues 508–518 (EQRDSSKDKML). The segment at 508-539 (EQRDSSKDKMLAPDPDPNGELLPGSPNPEEPI) is disordered.

This sequence belongs to the major facilitator superfamily. Monocarboxylate porter (TC 2.A.1.13) family. As to quaternary structure, monomer. Homodimer. Homooligomer. Highly expressed in liver and heart. In adult brain tissue expression is largely confined to endothelial cells of the blood-brain barrier (at protein level).

Its subcellular location is the cell membrane. The protein localises to the apical cell membrane. The catalysed reaction is 3,3',5-triiodo-L-thyronine(out) = 3,3',5-triiodo-L-thyronine(in). It carries out the reaction L-thyroxine(out) = L-thyroxine(in). The enzyme catalyses 3,3',5'-triiodo-L-thyronine(out) = 3,3',5'-triiodo-L-thyronine(in). It catalyses the reaction 3,3'-diiodo-L-thyronine(out) = 3,3'-diiodo-L-thyronine(in). Its function is as follows. Specific thyroid hormone transmembrane transporter, that mediates both uptake and efflux of thyroid hormones across the cell membrane independently of pH or a Na(+) gradient. Major substrates are the iodothyronines T3 and T4 and to a lesser extent rT3 and 3,3-diiodothyronine (3,3'-T2). Acts as an important mediator of thyroid hormone transport, especially T3, through the blood-brain barrier. This chain is Monocarboxylate transporter 8 (SLC16A2), found in Homo sapiens (Human).